Consider the following 587-residue polypeptide: Probable intramembrane protease YKL100C (587 aa).

At 1–85 (MDKYLNSFVD…HSLVFNYATL (85 aa)) the chain is on the lumenal side. The chain crosses the membrane as a helical span at residues 86-106 (VLIASALVVIGSFTSISSIPF). Residues 107–156 (TALPPTREHSLFDPTDFDVDHDCHVIYRENDEDKKKKKKSKRFFDMMDEK) lie on the Cytoplasmic side of the membrane. Residues 157-177 (HAIILPLTSGCTLLALYFVIK) form a helical membrane-spanning segment. Residues 178-192 (KLHLNWLKYVVKILN) are Lumenal-facing. The helical transmembrane segment at 193 to 213 (FNITLLNIPAGTFVYSYFLNS) threads the bilayer. The Cytoplasmic segment spans residues 214–303 (LFRNLSHLAS…KSKRQISNMY (90 aa)). A helical transmembrane segment spans residues 304-324 (LNSALIVSFVLSIVSTVYFYL). At 325 to 328 (SPND) the chain is on the lumenal side. Residues 329 to 349 (WLISNAVSMNMAIWSIAQLKL) traverse the membrane as a helical segment. Topologically, residues 350-351 (KN) are cytoplasmic. The chain crosses the membrane as a helical span at residues 352-372 (LKSGALILIALFFYDICFVFG). Asp366 is a catalytic residue. The Lumenal portion of the chain corresponds to 373 to 401 (TDVMVTVATNLDIPVKLSLPVKFNTAQNN). The chain crosses the membrane as a helical span at residues 402–422 (FNFSILGLGDIALPGMFIAMC). Residue Asp411 is part of the active site. At 423-450 (YKYDIWKWHLDHDDTEFHFLNWSYVGKY) the chain is on the cytoplasmic side. The helical transmembrane segment at 451–471 (FITAMVSYVASLVSAMVSLSI) threads the bilayer. Residues 472–475 (FNTA) are Lumenal-facing. Residues 476–496 (QPALLYIVPSLLISTILVACW) form a helical membrane-spanning segment. The PAL motif lies at 477-479 (PAL). Residues 497–587 (NKDFKQFWNF…EEDLLDDESS (91 aa)) are Cytoplasmic-facing. Residues 561–587 (EFVQEEDLSDSSEEELSEEDLLDDESS) form a disordered region.

This sequence belongs to the peptidase A22B family.

Its subcellular location is the membrane. It localises to the endoplasmic reticulum membrane. Its function is as follows. May act as intramembrane protease. The chain is Probable intramembrane protease YKL100C from Saccharomyces cerevisiae (strain ATCC 204508 / S288c) (Baker's yeast).